The sequence spans 277 residues: Phosphoribosylaminoimidazole-succinocarboxamide synthase (277 aa).

It belongs to the SAICAR synthetase family.

It catalyses the reaction 5-amino-1-(5-phospho-D-ribosyl)imidazole-4-carboxylate + L-aspartate + ATP = (2S)-2-[5-amino-1-(5-phospho-beta-D-ribosyl)imidazole-4-carboxamido]succinate + ADP + phosphate + 2 H(+). The protein operates within purine metabolism; IMP biosynthesis via de novo pathway; 5-amino-1-(5-phospho-D-ribosyl)imidazole-4-carboxamide from 5-amino-1-(5-phospho-D-ribosyl)imidazole-4-carboxylate: step 1/2. The sequence is that of Phosphoribosylaminoimidazole-succinocarboxamide synthase from Salinispora tropica (strain ATCC BAA-916 / DSM 44818 / JCM 13857 / NBRC 105044 / CNB-440).